A 622-amino-acid chain; its full sequence is Polypeptide N-acetylgalactosaminyltransferase 18 (622 aa).

Over 1–12 (MVCTRKTKTLVS) the chain is Cytoplasmic. A helical; Signal-anchor for type II membrane protein membrane pass occupies residues 13-35 (TCVILSGMTNIICLLYVGWVTNY). The Lumenal segment spans residues 36 to 622 (IASVYVRGQE…ITNVLRSLVS (587 aa)). Cystine bridges form between C144–C392, C383–C462, C497–C513, C545–C558, and C586–C606. N-linked (GlcNAc...) asparagine glycosylation occurs at N146. The tract at residues 153–267 (LPEVSIVFIF…VGWAEPVLTR (115 aa)) is catalytic subdomain A. Residue D194 participates in substrate binding. Residue N195 is glycosylated (N-linked (GlcNAc...) asparagine). Positions 251 and 253 each coordinate Mn(2+). Residue N320 is glycosylated (N-linked (GlcNAc...) asparagine). Residues 324 to 400 (PIRSPALIGC…PCSRIAHIER (77 aa)) form a catalytic subdomain B region. H397 is a binding site for Mn(2+). Substrate is bound by residues R400 and Y405. The Ricin B-type lectin domain occupies 484-614 (AYGVLQNSLK…KCSGQHWTIT (131 aa)).

The protein belongs to the glycosyltransferase 2 family. GalNAc-T subfamily. Mn(2+) serves as cofactor.

Its subcellular location is the golgi apparatus membrane. The enzyme catalyses L-seryl-[protein] + UDP-N-acetyl-alpha-D-galactosamine = a 3-O-[N-acetyl-alpha-D-galactosaminyl]-L-seryl-[protein] + UDP + H(+). It carries out the reaction L-threonyl-[protein] + UDP-N-acetyl-alpha-D-galactosamine = a 3-O-[N-acetyl-alpha-D-galactosaminyl]-L-threonyl-[protein] + UDP + H(+). The protein operates within protein modification; protein glycosylation. Functionally, catalyzes the initial reaction in O-linked oligosaccharide biosynthesis, the transfer of an N-acetyl-D-galactosamine (GalNAc) residue from UDP-GalNAc to a serine or threonine residue on the protein receptor. The chain is Polypeptide N-acetylgalactosaminyltransferase 18 (Galnt18) from Mus musculus (Mouse).